A 430-amino-acid chain; its full sequence is uncharacterized protein (430 aa).

This is an uncharacterized protein from Human herpesvirus 7 (strain JI) (HHV-7).